The following is a 146-amino-acid chain: Hemoglobin cathodic subunit beta (146 aa).

Residues 2–146 enclose the Globin domain; sequence EWSASERSTI…VVSALSKQYF (145 aa). Heme b is bound by residues His63 and His92.

This sequence belongs to the globin family. In terms of assembly, heterotetramer of two alpha chains and two beta chains. As to expression, red blood cells.

Functionally, involved in oxygen transport from gills to the various peripheral tissues. The polypeptide is Hemoglobin cathodic subunit beta (hbb2) (Anguilla anguilla (European freshwater eel)).